Here is a 225-residue protein sequence, read N- to C-terminus: Increased recombination centers protein 22 (225 aa).

Residues 1–24 (MRFFMLIGFNLLTALSSFCAAISA) form the signal peptide. Topologically, residues 25-169 (NNSDNVEHEQ…PTLFEIVSPP (145 aa)) are lumenal. Residues 170-190 (ISFFNPQFLSVQVIFLAIIGG) traverse the membrane as a helical segment. Over 191–225 (VSYYYMKSKTNQRPSKKSATVKKVDESWLPETYKK) the chain is Cytoplasmic. Positions 203–225 (RPSKKSATVKKVDESWLPETYKK) are disordered. The segment covering 212–225 (KKVDESWLPETYKK) has biased composition (basic and acidic residues).

Belongs to the IRC22 family.

It is found in the endoplasmic reticulum membrane. Functionally, is probably involved in a pathway contributing to genomic integrity. In Saccharomyces cerevisiae (strain AWRI1631) (Baker's yeast), this protein is Increased recombination centers protein 22 (IRC22).